Here is a 162-residue protein sequence, read N- to C-terminus: Large ribosomal subunit protein uL30 (162 aa).

This sequence belongs to the universal ribosomal protein uL30 family. As to quaternary structure, part of the 50S ribosomal subunit.

The polypeptide is Large ribosomal subunit protein uL30 (Korarchaeum cryptofilum (strain OPF8)).